A 54-amino-acid chain; its full sequence is MAATDVRPKITLACEECKHRNYITNKNRRNDPDRLAMKKFCPNCGTHRVHKETR.

It belongs to the bacterial ribosomal protein bL33 family.

This chain is Large ribosomal subunit protein bL33B, found in Saccharopolyspora erythraea (strain ATCC 11635 / DSM 40517 / JCM 4748 / NBRC 13426 / NCIMB 8594 / NRRL 2338).